The primary structure comprises 356 residues: Protein translocase subunit SecY (356 aa).

Helical transmembrane passes span 24-44 (LFVI…IPGI), 77-97 (IFAL…LLTV), 125-145 (LVLA…MPGM), 154-174 (FAFY…LMWL), 183-203 (IGNG…PPAV), 217-237 (FLLL…VVFI), 274-294 (VIPA…ASWF), and 317-337 (YVLL…ALVF).

Belongs to the SecY/SEC61-alpha family. Component of the Sec protein translocase complex. Heterotrimer consisting of SecY, SecE and SecG subunits. The heterotrimers can form oligomers, although 1 heterotrimer is thought to be able to translocate proteins. Interacts with the ribosome. Interacts with SecDF, and other proteins may be involved. Interacts with SecA.

The protein resides in the cell membrane. Its function is as follows. The central subunit of the protein translocation channel SecYEG. Consists of two halves formed by TMs 1-5 and 6-10. These two domains form a lateral gate at the front which open onto the bilayer between TMs 2 and 7, and are clamped together by SecE at the back. The channel is closed by both a pore ring composed of hydrophobic SecY resides and a short helix (helix 2A) on the extracellular side of the membrane which forms a plug. The plug probably moves laterally to allow the channel to open. The ring and the pore may move independently. The polypeptide is Protein translocase subunit SecY (Buchnera aphidicola subsp. Acyrthosiphon kondoi (Acyrthosiphon kondoi symbiotic bacterium)).